The following is a 78-amino-acid chain: MFPSWSTTFVLCMGLCSLMNGALAQYDEGASIEDFEFRSACTTANNVCERMADTCCPGLQCIGCNPLDPDDDGHCSCQ.

The signal sequence occupies residues 1-24 (MFPSWSTTFVLCMGLCSLMNGALA).

It belongs to the scoloptoxin-13 family. In terms of processing, contains 4 disulfide bonds. As to expression, expressed by the venom gland.

Its subcellular location is the secreted. This is U-scoloptoxin(13)-Er1a from Ethmostigmus rubripes (Giant centipede).